A 556-amino-acid chain; its full sequence is Arginine--tRNA ligase (556 aa).

Residues 132–142 (ANPTGSLHLGH) carry the 'HIGH' region motif.

It belongs to the class-I aminoacyl-tRNA synthetase family. In terms of assembly, monomer.

It localises to the cytoplasm. The catalysed reaction is tRNA(Arg) + L-arginine + ATP = L-arginyl-tRNA(Arg) + AMP + diphosphate. This chain is Arginine--tRNA ligase, found in Anoxybacillus flavithermus (strain DSM 21510 / WK1).